The primary structure comprises 331 residues: Tryptophan--tRNA ligase 1 (331 aa).

Residues K9–T11 and G17–N18 contribute to the ATP site. The short motif at P10–N18 is the 'HIGH' region element. L-tryptophan is bound at residue D137. Residues G149–D151, V188, and K197–S201 contribute to the ATP site. A 'KMSKS' region motif is present at residues K197–S201.

It belongs to the class-I aminoacyl-tRNA synthetase family. As to quaternary structure, homodimer.

The protein resides in the cytoplasm. It carries out the reaction tRNA(Trp) + L-tryptophan + ATP = L-tryptophyl-tRNA(Trp) + AMP + diphosphate + H(+). Catalyzes the attachment of tryptophan to tRNA(Trp). The chain is Tryptophan--tRNA ligase 1 from Streptomyces avermitilis (strain ATCC 31267 / DSM 46492 / JCM 5070 / NBRC 14893 / NCIMB 12804 / NRRL 8165 / MA-4680).